We begin with the raw amino-acid sequence, 419 residues long: Tyrosine--tRNA ligase (419 aa).

Tyrosine 34 lines the L-tyrosine pocket. The short motif at 39–48 (PTADSLHLGH) is the 'HIGH' region element. L-tyrosine-binding residues include tyrosine 169 and glutamine 173. The 'KMSKS' region motif lies at 229-233 (KFGKS). An ATP-binding site is contributed by lysine 232. The 68-residue stretch at 352–419 (LNIIDLLVTS…KKKYFVLNFK (68 aa)) folds into the S4 RNA-binding domain.

It belongs to the class-I aminoacyl-tRNA synthetase family. TyrS type 1 subfamily. As to quaternary structure, homodimer.

Its subcellular location is the cytoplasm. It carries out the reaction tRNA(Tyr) + L-tyrosine + ATP = L-tyrosyl-tRNA(Tyr) + AMP + diphosphate + H(+). In terms of biological role, catalyzes the attachment of tyrosine to tRNA(Tyr) in a two-step reaction: tyrosine is first activated by ATP to form Tyr-AMP and then transferred to the acceptor end of tRNA(Tyr). In Streptococcus agalactiae serotype Ia (strain ATCC 27591 / A909 / CDC SS700), this protein is Tyrosine--tRNA ligase.